The following is a 382-amino-acid chain: Chaperone protein DnaJ (382 aa).

Positions 5–70 (DYYEVLGLKK…QKRAAYDQYG (66 aa)) constitute a J domain. The segment at 134–212 (GTTKDIQINT…CHGEGRVHKK (79 aa)) adopts a CR-type zinc-finger fold. Residues cysteine 147, cysteine 150, cysteine 164, cysteine 167, cysteine 186, cysteine 189, cysteine 200, and cysteine 203 each contribute to the Zn(2+) site. CXXCXGXG motif repeat units follow at residues 147 to 154 (CDSCGGSG), 164 to 171 (CPHCHGSG), 186 to 193 (CPSCHGSG), and 200 to 207 (CRSCHGEG).

This sequence belongs to the DnaJ family. In terms of assembly, homodimer. It depends on Zn(2+) as a cofactor.

The protein localises to the cytoplasm. Functionally, participates actively in the response to hyperosmotic and heat shock by preventing the aggregation of stress-denatured proteins and by disaggregating proteins, also in an autonomous, DnaK-independent fashion. Unfolded proteins bind initially to DnaJ; upon interaction with the DnaJ-bound protein, DnaK hydrolyzes its bound ATP, resulting in the formation of a stable complex. GrpE releases ADP from DnaK; ATP binding to DnaK triggers the release of the substrate protein, thus completing the reaction cycle. Several rounds of ATP-dependent interactions between DnaJ, DnaK and GrpE are required for fully efficient folding. Also involved, together with DnaK and GrpE, in the DNA replication of plasmids through activation of initiation proteins. This chain is Chaperone protein DnaJ, found in Haemophilus influenzae (strain PittGG).